A 350-amino-acid polypeptide reads, in one-letter code: MAIDENKQKALAAALSLIEKQFGTGSIMRLGEDRSMDVETISTGSLSLDIALGAGGLPMGRIVEIYGPESSGKTTLTLQVIATAQKEGKICAFIDAEHALDPIYAKNLGVDIDNLLCSQPDTGEQALEICDVLTRSGAVDVIIVDSVAALTPKAEIEGEIGDSHIGLAARMMSQAMRKLTSNLKNANTLLIFINQIRMKIGVMFGNPETTTGGNALKFYSSVRLDIRRIGSVKEGDVVVGSETRVKVVKNKVAAPFKQADFQITYGKGINIHGELVDLGVKNNLIEKAGSWYSYNGNKIGQGKNNVCNFLKYHPQLAAELDKKLREMLLHNTTRTESNSLVRDDEGTFDE.

67-74 is an ATP binding site; sequence GPESSGKT.

The protein belongs to the RecA family.

It is found in the cytoplasm. Can catalyze the hydrolysis of ATP in the presence of single-stranded DNA, the ATP-dependent uptake of single-stranded DNA by duplex DNA, and the ATP-dependent hybridization of homologous single-stranded DNAs. It interacts with LexA causing its activation and leading to its autocatalytic cleavage. This chain is Protein RecA, found in Baumannia cicadellinicola subsp. Homalodisca coagulata.